The following is a 179-amino-acid chain: uncharacterized protein (179 aa).

Residues 1–32 (MELQGAQEDLGISLSSPRRNHETRPGSKAKGR) are disordered.

This is an uncharacterized protein from Homo sapiens (Human).